Consider the following 155-residue polypeptide: SsrA-binding protein (155 aa).

It belongs to the SmpB family.

Its subcellular location is the cytoplasm. Its function is as follows. Required for rescue of stalled ribosomes mediated by trans-translation. Binds to transfer-messenger RNA (tmRNA), required for stable association of tmRNA with ribosomes. tmRNA and SmpB together mimic tRNA shape, replacing the anticodon stem-loop with SmpB. tmRNA is encoded by the ssrA gene; the 2 termini fold to resemble tRNA(Ala) and it encodes a 'tag peptide', a short internal open reading frame. During trans-translation Ala-aminoacylated tmRNA acts like a tRNA, entering the A-site of stalled ribosomes, displacing the stalled mRNA. The ribosome then switches to translate the ORF on the tmRNA; the nascent peptide is terminated with the 'tag peptide' encoded by the tmRNA and targeted for degradation. The ribosome is freed to recommence translation, which seems to be the essential function of trans-translation. The sequence is that of SsrA-binding protein from Helicobacter hepaticus (strain ATCC 51449 / 3B1).